We begin with the raw amino-acid sequence, 92 residues long: C-C motif chemokine 4 (92 aa).

The first 23 residues, 1–23 (MKLCVTVLSLLVLVAAFCSPALS), serve as a signal peptide directing secretion. 2 disulfide bridges follow: Cys34–Cys58 and Cys35–Cys74.

This sequence belongs to the intercrine beta (chemokine CC) family. Homodimer. Interacts with CCR5.

Its subcellular location is the secreted. In terms of biological role, monokine with inflammatory and chemokinetic properties. The chain is C-C motif chemokine 4 (CCL4) from Sus scrofa (Pig).